A 332-amino-acid chain; its full sequence is MTTPHSQAQPGLPIDPHPDEYKVAALVFYSCIFIIGLFVNVTALWVFSCTTKKRTTVTVYMMNVALLDLVFIMSLPFRMLYYAKGEWPFGEYFCRILGALTVFYPSIALWLLAFISADRYMAIVQPKYAKELKNTCKAVMACVGVWIMTLTTTIPLLLLYEDPDTASSTPPTCLKISDIIYLKAINALNFTRLIFFFLIPLFIMIGCYLVIIHSLLHGKTSKLKPKVKEKSIRIIITLMVQVLVCFMPFHICFAFLMLGGDENSYNPWGAFTTFLMNLSTCLDVILYYIVSKQFQARVISVMLYRNYLRSVRRKSFRSGSLRSLSNINSEML.

At 1–26 (MTTPHSQAQPGLPIDPHPDEYKVAAL) the chain is on the extracellular side. The chain crosses the membrane as a helical span at residues 27–47 (VFYSCIFIIGLFVNVTALWVF). Topologically, residues 48–56 (SCTTKKRTT) are cytoplasmic. A helical membrane pass occupies residues 57-77 (VTVYMMNVALLDLVFIMSLPF). The Extracellular segment spans residues 78-95 (RMLYYAKGEWPFGEYFCR). Cysteine 94 and cysteine 173 are disulfide-bonded. The chain crosses the membrane as a helical span at residues 96-116 (ILGALTVFYPSIALWLLAFIS). Residues 117 to 138 (ADRYMAIVQPKYAKELKNTCKA) are Cytoplasmic-facing. A helical transmembrane segment spans residues 139–159 (VMACVGVWIMTLTTTIPLLLL). Over 160–192 (YEDPDTASSTPPTCLKISDIIYLKAINALNFTR) the chain is Extracellular. Asparagine 189 carries N-linked (GlcNAc...) asparagine glycosylation. Residues 193–213 (LIFFFLIPLFIMIGCYLVIIH) traverse the membrane as a helical segment. Residues 214-233 (SLLHGKTSKLKPKVKEKSIR) are Cytoplasmic-facing. The helical transmembrane segment at 234–254 (IIITLMVQVLVCFMPFHICFA) threads the bilayer. The Extracellular segment spans residues 255–269 (FLMLGGDENSYNPWG). The helical transmembrane segment at 270 to 290 (AFTTFLMNLSTCLDVILYYIV) threads the bilayer. Residues 291–332 (SKQFQARVISVMLYRNYLRSVRRKSFRSGSLRSLSNINSEML) are Cytoplasmic-facing. A Phosphoserine modification is found at serine 323.

It belongs to the G-protein coupled receptor 1 family.

The protein resides in the cell membrane. It localises to the cytoplasmic vesicle membrane. Its function is as follows. G protein-coupled receptor (GPCR) that plays a role in diverse physiological processes particularly within the immune and nervous systems. Becomes active when triggered by various endogenous ligands including endocannabinoid N-arachidonyl glycine (NAGly), delta-9-tetrahydrocannabinol or resolvin D2/RvD2 derived from the omega-3 fatty acid docosahexaenoic acid (DHA). Upon RvD2 binding, facilitates the resolution of inflammation, aiding in tissue repair and homeostasis. Mechanistically, RvD2 ligation initiates Galphas protein coupling, activation of cAMP-PKA signaling pathway and phosphorylation of STAT3, leading to RvD2-stimulated macrophage phagocytosis. Mediates NAGly-induced process of reorganization of actin filaments and induction of acrosomal exocytosis. Activation by N-arachidonoyl glycine (NAGly) can also induce apoptosis in macrophages. Plays a role in homeostasis of CD8+ subsets of intraepithelial lymphocytes (IELs) (CD8alphaalpha and CD8alphabeta IELs) in small intestine by supporting preferential migration of CD8alphaalpha T-cells to intraepithelial compartment over lamina propria compartment, and by mediating their reconstitution into small intestine after bone marrow transplant. Participates also in hypotensive responses, mediating reduction in intraocular and blood pressure. The polypeptide is N-arachidonyl glycine receptor (GPR18) (Bos taurus (Bovine)).